The following is a 231-amino-acid chain: Large ribosomal subunit protein uL1 (231 aa).

The protein belongs to the universal ribosomal protein uL1 family. In terms of assembly, part of the 50S ribosomal subunit.

In terms of biological role, binds directly to 23S rRNA. The L1 stalk is quite mobile in the ribosome, and is involved in E site tRNA release. Functionally, protein L1 is also a translational repressor protein, it controls the translation of the L11 operon by binding to its mRNA. In Cellvibrio japonicus (strain Ueda107) (Pseudomonas fluorescens subsp. cellulosa), this protein is Large ribosomal subunit protein uL1.